The chain runs to 1342 residues: DNA-directed RNA polymerase subunit beta (1342 aa).

This sequence belongs to the RNA polymerase beta chain family. The RNAP catalytic core consists of 2 alpha, 1 beta, 1 beta' and 1 omega subunit. When a sigma factor is associated with the core the holoenzyme is formed, which can initiate transcription.

It catalyses the reaction RNA(n) + a ribonucleoside 5'-triphosphate = RNA(n+1) + diphosphate. In terms of biological role, DNA-dependent RNA polymerase catalyzes the transcription of DNA into RNA using the four ribonucleoside triphosphates as substrates. The protein is DNA-directed RNA polymerase subunit beta of Vibrio parahaemolyticus serotype O3:K6 (strain RIMD 2210633).